Reading from the N-terminus, the 569-residue chain is Urease subunit alpha (569 aa).

The 439-residue stretch at Gly-131–Phe-569 folds into the Urease domain. Ni(2+) contacts are provided by His-136, His-138, and Lys-218. Residue Lys-218 is modified to N6-carboxylysine. Position 220 (His-220) interacts with substrate. 2 residues coordinate Ni(2+): His-247 and His-273. The active-site Proton donor is the His-321. Residue Asp-361 participates in Ni(2+) binding.

Belongs to the metallo-dependent hydrolases superfamily. Urease alpha subunit family. In terms of assembly, heterotrimer of UreA (gamma), UreB (beta) and UreC (alpha) subunits. Three heterotrimers associate to form the active enzyme. Ni cation is required as a cofactor. Post-translationally, carboxylation allows a single lysine to coordinate two nickel ions.

It localises to the cytoplasm. It catalyses the reaction urea + 2 H2O + H(+) = hydrogencarbonate + 2 NH4(+). The protein operates within nitrogen metabolism; urea degradation; CO(2) and NH(3) from urea (urease route): step 1/1. The sequence is that of Urease subunit alpha from Agrobacterium fabrum (strain C58 / ATCC 33970) (Agrobacterium tumefaciens (strain C58)).